Here is a 377-residue protein sequence, read N- to C-terminus: Flap endonuclease 1 (377 aa).

An N-domain region spans residues 1-105 (MGIKGLNAII…HELSKRTARR (105 aa)). D34 is a Mg(2+) binding site. 2 residues coordinate DNA: R47 and R71. D87 serves as a coordination point for Mg(2+). Residues 99-119 (SKRTARREETEKKLQEATDQA) are disordered. Residues 120 to 251 (EKMKQERRLV…VTALKLIKEY (132 aa)) are I-domain. Mg(2+) contacts are provided by E156, E158, D177, and D179. E156 lines the DNA pocket. The DNA site is built by G229 and D231. D231 serves as a coordination point for Mg(2+). An interaction with PCNA region spans residues 338 to 346 (VQGRLDGFF).

The protein belongs to the XPG/RAD2 endonuclease family. FEN1 subfamily. In terms of assembly, interacts with PCNA. Three molecules of FEN1 bind to one PCNA trimer with each molecule binding to one PCNA monomer. PCNA stimulates the nuclease activity without altering cleavage specificity. Requires Mg(2+) as cofactor. Phosphorylated. Phosphorylation upon DNA damage induces relocalization to the nuclear plasma.

Its subcellular location is the nucleus. The protein resides in the nucleolus. It localises to the nucleoplasm. The protein localises to the mitochondrion. Its function is as follows. Structure-specific nuclease with 5'-flap endonuclease and 5'-3' exonuclease activities involved in DNA replication and repair. During DNA replication, cleaves the 5'-overhanging flap structure that is generated by displacement synthesis when DNA polymerase encounters the 5'-end of a downstream Okazaki fragment. It enters the flap from the 5'-end and then tracks to cleave the flap base, leaving a nick for ligation. Also involved in the long patch base excision repair (LP-BER) pathway, by cleaving within the apurinic/apyrimidinic (AP) site-terminated flap. Acts as a genome stabilization factor that prevents flaps from equilibrating into structures that lead to duplications and deletions. Also possesses 5'-3' exonuclease activity on nicked or gapped double-stranded DNA, and exhibits RNase H activity. Also involved in replication and repair of rDNA and in repairing mitochondrial DNA. The chain is Flap endonuclease 1 from Vanderwaltozyma polyspora (strain ATCC 22028 / DSM 70294 / BCRC 21397 / CBS 2163 / NBRC 10782 / NRRL Y-8283 / UCD 57-17) (Kluyveromyces polysporus).